Consider the following 105-residue polypeptide: Thioredoxin (105 aa).

In terms of domain architecture, Thioredoxin spans 2 to 105 (VKQIESKYAF…KLEATINELI (104 aa)). N6-acetyllysine is present on lysine 3. Lysine 8 is modified (N6-succinyllysine). Active-site nucleophile residues include cysteine 32 and cysteine 35. Cysteine 32 and cysteine 35 are oxidised to a cystine. Lysine 39 carries the post-translational modification N6-acetyllysine. S-nitrosocysteine occurs at positions 62 and 69. An S-nitrosocysteine; alternate modification is found at cysteine 73. Lysine 94 carries the N6-acetyllysine; alternate modification. The residue at position 94 (lysine 94) is an N6-succinyllysine; alternate.

It belongs to the thioredoxin family. Homodimer; disulfide-linked. Interacts with TXNIP through the redox-active site. Interacts with MAP3K5 and CASP3. Interacts with APEX1; the interaction stimulates the FOS/JUN AP-1 DNA-binding activity in a redox-dependent manner. In the fully reduced protein, both Cys-69 and Cys-73 are nitrosylated in response to nitric oxide (NO). When two disulfide bonds are present in the protein, only Cys-73 is nitrosylated. Cys-73 can serve as donor for nitrosylation of target proteins. In terms of tissue distribution, erythrocytes.

It is found in the nucleus. It localises to the cytoplasm. The protein resides in the secreted. Its function is as follows. Participates in various redox reactions through the reversible oxidation of its active center dithiol to a disulfide and catalyzes dithiol-disulfide exchange reactions. Plays a role in the reversible S-nitrosylation of cysteine residues in target proteins, and thereby contributes to the response to intracellular nitric oxide. Nitrosylates the active site Cys of CASP3 in response to nitric oxide (NO), and thereby inhibits caspase-3 activity. Induces the FOS/JUN AP-1 DNA binding activity in ionizing radiation (IR) cells through its oxidation/reduction status and stimulates AP-1 transcriptional activity. The polypeptide is Thioredoxin (TXN) (Sus scrofa (Pig)).